The following is a 221-amino-acid chain: Very-long-chain (3R)-3-hydroxyacyl-CoA dehydratase PASTICCINO 2A (221 aa).

The Cytoplasmic segment spans residues 1 to 11 (MAGVGSAVRRL). Residues 12–32 (YLSVYNWAVFFGWAQVLYYAV) traverse the membrane as a helical segment. Topologically, residues 33–51 (TTLLESGHEAVYAAVERPL) are lumenal. A helical transmembrane segment spans residues 52-70 (QFAQTAAFLEILHGLVGLV). Residues 71-76 (RSPVSA) are Cytoplasmic-facing. The chain crosses the membrane as a helical span at residues 77–95 (TLPQIGSRLFLTWGILWSF). Residues 96 to 100 (PETHS) are Lumenal-facing. Residues 101–121 (HILVTSLVISWSITEIIRYSF) form a helical membrane-spanning segment. The Cytoplasmic segment spans residues 122–141 (FGMKEAFGFAPSWLLWLRYS). The helical transmembrane segment at 142–165 (TFMVLYPTGISSEVGLIYIALPYM) threads the bilayer. Active-site residues include Y147 and E154. Residues 166-184 (KASEKYCLRMPNKWNFSFD) are Lumenal-facing. The chain crosses the membrane as a helical span at residues 185–209 (FFYASILSLAIYVPGSPHMFTYMLA). At 210 to 221 (QRKKALAKAKAA) the chain is on the cytoplasmic side.

It belongs to the very long-chain fatty acids dehydratase HACD family.

The protein localises to the endoplasmic reticulum membrane. The catalysed reaction is a very-long-chain (3R)-3-hydroxyacyl-CoA = a very-long-chain (2E)-enoyl-CoA + H2O. The protein operates within lipid metabolism; fatty acid biosynthesis. In terms of biological role, catalyzes the third of the four reactions of the long-chain fatty acids elongation cycle. This endoplasmic reticulum-bound enzymatic process, allows the addition of two carbons to the chain of long- and very long-chain fatty acids/VLCFAs per cycle. This enzyme catalyzes the dehydration of the 3-hydroxyacyl-CoA intermediate into trans-2,3-enoyl-CoA, within each cycle of fatty acid elongation. Thereby, it participates in the production of VLCFAs of different chain lengths that are involved in multiple biological processes as precursors of membrane lipids and lipid mediators. May be an anti-phosphatase that prevents CDKA-1 dephosphorylation and activation. Involved in the hormonal control of cell division and differentiation. Required for proliferation control of meristematic and non-meristematic cells. Negative regulator of the cell cycle. This Oryza sativa subsp. japonica (Rice) protein is Very-long-chain (3R)-3-hydroxyacyl-CoA dehydratase PASTICCINO 2A (PAS2A).